The primary structure comprises 478 residues: Proline--tRNA ligase (478 aa).

The protein belongs to the class-II aminoacyl-tRNA synthetase family. ProS type 3 subfamily. Homodimer.

Its subcellular location is the cytoplasm. It carries out the reaction tRNA(Pro) + L-proline + ATP = L-prolyl-tRNA(Pro) + AMP + diphosphate. Its function is as follows. Catalyzes the attachment of proline to tRNA(Pro) in a two-step reaction: proline is first activated by ATP to form Pro-AMP and then transferred to the acceptor end of tRNA(Pro). The sequence is that of Proline--tRNA ligase from Clostridium botulinum (strain ATCC 19397 / Type A).